The primary structure comprises 67 residues: Major cold shock protein (67 aa).

The 60-residue stretch at 4 to 63 folds into the CSD domain; it reads GTVKWFNAEKGFGFISTENGQDVFAHFSAIQTNGFKTLEEGQKVAFDVEEGQRGPQAVNI.

As to quaternary structure, homodimer.

It is found in the cytoplasm. This Streptococcus pyogenes serotype M3 (strain ATCC BAA-595 / MGAS315) protein is Major cold shock protein (cspA).